The primary structure comprises 443 residues: Probable D-serine dehydratase (443 aa).

Lysine 116 is modified (N6-(pyridoxal phosphate)lysine).

It belongs to the serine/threonine dehydratase family. DsdA subfamily. Requires pyridoxal 5'-phosphate as cofactor.

It catalyses the reaction D-serine = pyruvate + NH4(+). This Bacillus cereus (strain ATCC 14579 / DSM 31 / CCUG 7414 / JCM 2152 / NBRC 15305 / NCIMB 9373 / NCTC 2599 / NRRL B-3711) protein is Probable D-serine dehydratase.